The chain runs to 729 residues: Fatty acid oxidation complex subunit alpha (729 aa).

The tract at residues 1-189 (MLYKGDTLYL…KIGLVDGVVK (189 aa)) is enoyl-CoA hydratase/isomerase. Position 296 (D296) interacts with substrate. The interval 311–729 (ETPKQAAVLG…ARPVGSLKTA (419 aa)) is 3-hydroxyacyl-CoA dehydrogenase. NAD(+) is bound by residues M324, D343, 400 to 402 (VVE), K407, and S429. H450 functions as the For 3-hydroxyacyl-CoA dehydrogenase activity in the catalytic mechanism. NAD(+) is bound at residue N453. Substrate is bound by residues N500 and Y660. Residues 708 to 729 (RHNEPYYPPVEPARPVGSLKTA) form a disordered region.

This sequence in the N-terminal section; belongs to the enoyl-CoA hydratase/isomerase family. It in the C-terminal section; belongs to the 3-hydroxyacyl-CoA dehydrogenase family. As to quaternary structure, heterotetramer of two alpha chains (FadB) and two beta chains (FadA).

The enzyme catalyses a (3S)-3-hydroxyacyl-CoA + NAD(+) = a 3-oxoacyl-CoA + NADH + H(+). It catalyses the reaction a (3S)-3-hydroxyacyl-CoA = a (2E)-enoyl-CoA + H2O. The catalysed reaction is a 4-saturated-(3S)-3-hydroxyacyl-CoA = a (3E)-enoyl-CoA + H2O. It carries out the reaction (3S)-3-hydroxybutanoyl-CoA = (3R)-3-hydroxybutanoyl-CoA. The enzyme catalyses a (3Z)-enoyl-CoA = a 4-saturated (2E)-enoyl-CoA. It catalyses the reaction a (3E)-enoyl-CoA = a 4-saturated (2E)-enoyl-CoA. Its pathway is lipid metabolism; fatty acid beta-oxidation. Functionally, involved in the aerobic and anaerobic degradation of long-chain fatty acids via beta-oxidation cycle. Catalyzes the formation of 3-oxoacyl-CoA from enoyl-CoA via L-3-hydroxyacyl-CoA. It can also use D-3-hydroxyacyl-CoA and cis-3-enoyl-CoA as substrate. This chain is Fatty acid oxidation complex subunit alpha, found in Salmonella agona (strain SL483).